Here is a 299-residue protein sequence, read N- to C-terminus: Tyrosine recombinase XerD (299 aa).

A Core-binding (CB) domain is found at 3 to 88 (QQDNPLIEQF…AMRRLFQYLY (86 aa)). Residues 109–293 (RLPKDLSEAQ…ATERLRQLHQ (185 aa)) enclose the Tyr recombinase domain. Active-site residues include Arg-149, Lys-173, His-245, Arg-248, and His-271. The active-site O-(3'-phospho-DNA)-tyrosine intermediate is the Tyr-280.

This sequence belongs to the 'phage' integrase family. XerD subfamily. In terms of assembly, forms a cyclic heterotetrameric complex composed of two molecules of XerC and two molecules of XerD, in which XerC interacts with XerD via its C-terminal region, XerD interacts with XerC via its C-terminal region and so on.

Its subcellular location is the cytoplasm. With respect to regulation, ftsK may regulate the catalytic switch between XerC and XerD in the heterotetrameric complex during the two steps of the recombination process. Site-specific tyrosine recombinase, which acts by catalyzing the cutting and rejoining of the recombining DNA molecules. Binds cooperatively to specific DNA consensus sequences that are separated from XerC binding sites by a short central region, forming the heterotetrameric XerC-XerD complex that recombines DNA substrates. The complex is essential to convert dimers of the bacterial chromosome into monomers to permit their segregation at cell division. It also contributes to the segregational stability of plasmids. In the complex XerD specifically exchanges the bottom DNA strands. This is Tyrosine recombinase XerD from Yersinia pestis.